A 210-amino-acid chain; its full sequence is Cell wall protein SRL1 (210 aa).

The first 19 residues, 1–19 (MLQSVVFFALLTFASSVSA), serve as a signal peptide directing secretion. An N-linked (GlcNAc...) asparagine glycan is attached at N23. Disordered stretches follow at residues 80-99 (SLST…HEIT) and 118-142 (LSPS…VKSF). The segment covering 118-127 (LSPSSTAASV) has biased composition (low complexity). Positions 132–141 (SNNKDAKVKS) are enriched in basic and acidic residues. N-linked (GlcNAc...) asparagine glycosylation is found at N174, N200, and N206.

The protein resides in the secreted. It is found in the cell wall. The protein localises to the cell surface. Its function is as follows. Required to stabilize the cell wall in the absence of multiple GPI-anchored mannoproteins. This is Cell wall protein SRL1 (SRL1) from Saccharomyces cerevisiae (strain ATCC 204508 / S288c) (Baker's yeast).